Here is a 76-residue protein sequence, read N- to C-terminus: Small ribosomal subunit protein bS18 (76 aa).

Belongs to the bacterial ribosomal protein bS18 family. As to quaternary structure, part of the 30S ribosomal subunit. Forms a tight heterodimer with protein bS6.

Binds as a heterodimer with protein bS6 to the central domain of the 16S rRNA, where it helps stabilize the platform of the 30S subunit. This is Small ribosomal subunit protein bS18 from Petrotoga mobilis (strain DSM 10674 / SJ95).